The chain runs to 198 residues: Probable chemoreceptor glutamine deamidase CheD (198 aa).

The protein belongs to the CheD family.

It carries out the reaction L-glutaminyl-[protein] + H2O = L-glutamyl-[protein] + NH4(+). Probably deamidates glutamine residues to glutamate on methyl-accepting chemotaxis receptors (MCPs), playing an important role in chemotaxis. This is Probable chemoreceptor glutamine deamidase CheD from Xanthomonas campestris pv. campestris (strain 8004).